Reading from the N-terminus, the 492-residue chain is Bifunctional purine biosynthesis protein PurH (492 aa).

The MGS-like domain maps to 1-144; it reads MKKAILSVSN…KNFKHVTTIV (144 aa).

This sequence belongs to the PurH family.

The enzyme catalyses (6R)-10-formyltetrahydrofolate + 5-amino-1-(5-phospho-beta-D-ribosyl)imidazole-4-carboxamide = 5-formamido-1-(5-phospho-D-ribosyl)imidazole-4-carboxamide + (6S)-5,6,7,8-tetrahydrofolate. The catalysed reaction is IMP + H2O = 5-formamido-1-(5-phospho-D-ribosyl)imidazole-4-carboxamide. It functions in the pathway purine metabolism; IMP biosynthesis via de novo pathway; 5-formamido-1-(5-phospho-D-ribosyl)imidazole-4-carboxamide from 5-amino-1-(5-phospho-D-ribosyl)imidazole-4-carboxamide (10-formyl THF route): step 1/1. The protein operates within purine metabolism; IMP biosynthesis via de novo pathway; IMP from 5-formamido-1-(5-phospho-D-ribosyl)imidazole-4-carboxamide: step 1/1. The polypeptide is Bifunctional purine biosynthesis protein PurH (Staphylococcus epidermidis (strain ATCC 35984 / DSM 28319 / BCRC 17069 / CCUG 31568 / BM 3577 / RP62A)).